A 166-amino-acid polypeptide reads, in one-letter code: Large ribosomal subunit protein uL10 (166 aa).

Belongs to the universal ribosomal protein uL10 family. In terms of assembly, part of the ribosomal stalk of the 50S ribosomal subunit. The N-terminus interacts with L11 and the large rRNA to form the base of the stalk. The C-terminus forms an elongated spine to which L12 dimers bind in a sequential fashion forming a multimeric L10(L12)X complex.

In terms of biological role, forms part of the ribosomal stalk, playing a central role in the interaction of the ribosome with GTP-bound translation factors. The sequence is that of Large ribosomal subunit protein uL10 from Stutzerimonas stutzeri (strain A1501) (Pseudomonas stutzeri).